The primary structure comprises 813 residues: LPS-assembly protein LptD (813 aa).

Residues 1 to 22 (MRRALRLLPLPLSIAICLPAMA) form the signal peptide.

Belongs to the LptD family. Component of the lipopolysaccharide transport and assembly complex. Interacts with LptE and LptA.

The protein resides in the cell outer membrane. Together with LptE, is involved in the assembly of lipopolysaccharide (LPS) at the surface of the outer membrane. The protein is LPS-assembly protein LptD of Xanthomonas oryzae pv. oryzae (strain KACC10331 / KXO85).